We begin with the raw amino-acid sequence, 677 residues long: Methionine--tRNA ligase (677 aa).

Residues 15 to 25 carry the 'HIGH' region motif; sequence PYANGSIHLGH. Zn(2+) is bound by residues cysteine 146, cysteine 149, cysteine 159, and cysteine 162. The 'KMSKS' region motif lies at 333 to 337; that stretch reads KMSKS. ATP is bound at residue lysine 336. The 103-residue stretch at 575–677 folds into the tRNA-binding domain; the sequence is DFAKIDLRVA…DGAKPGQQVK (103 aa).

The protein belongs to the class-I aminoacyl-tRNA synthetase family. MetG type 1 subfamily. As to quaternary structure, homodimer. Requires Zn(2+) as cofactor.

Its subcellular location is the cytoplasm. It catalyses the reaction tRNA(Met) + L-methionine + ATP = L-methionyl-tRNA(Met) + AMP + diphosphate. Its function is as follows. Is required not only for elongation of protein synthesis but also for the initiation of all mRNA translation through initiator tRNA(fMet) aminoacylation. This is Methionine--tRNA ligase from Salmonella choleraesuis (strain SC-B67).